A 243-amino-acid polypeptide reads, in one-letter code: 1-(5-phosphoribosyl)-5-[(5-phosphoribosylamino)methylideneamino] imidazole-4-carboxamide isomerase (243 aa).

The Proton acceptor role is filled by Asp-8. Asp-129 acts as the Proton donor in catalysis.

The protein belongs to the HisA/HisF family.

It localises to the cytoplasm. The enzyme catalyses 1-(5-phospho-beta-D-ribosyl)-5-[(5-phospho-beta-D-ribosylamino)methylideneamino]imidazole-4-carboxamide = 5-[(5-phospho-1-deoxy-D-ribulos-1-ylimino)methylamino]-1-(5-phospho-beta-D-ribosyl)imidazole-4-carboxamide. Its pathway is amino-acid biosynthesis; L-histidine biosynthesis; L-histidine from 5-phospho-alpha-D-ribose 1-diphosphate: step 4/9. This chain is 1-(5-phosphoribosyl)-5-[(5-phosphoribosylamino)methylideneamino] imidazole-4-carboxamide isomerase, found in Carboxydothermus hydrogenoformans (strain ATCC BAA-161 / DSM 6008 / Z-2901).